The primary structure comprises 94 residues: Small ribosomal subunit protein uS17 (94 aa).

The protein belongs to the universal ribosomal protein uS17 family. Part of the 30S ribosomal subunit.

Functionally, one of the primary rRNA binding proteins, it binds specifically to the 5'-end of 16S ribosomal RNA. In Streptomyces griseus subsp. griseus (strain JCM 4626 / CBS 651.72 / NBRC 13350 / KCC S-0626 / ISP 5235), this protein is Small ribosomal subunit protein uS17.